A 298-amino-acid chain; its full sequence is MALDKDIVGSIEFLEVVGLQGSTYLLKGPNGESVKLNQSEVAEEDDFELGEEYSFFVYPNRSGDLFATQNMPDITKDKYDFAKVIKTDRDGAHIDVGLPREVLVPWEDLPKLKELWPKAGDYLLVTLRIDSTNQMFGRLASETIVESMFTPVNDDSKQNEYISARAYRLLRVGSFLLSNEGYKIFVHESERKHEPRLGEAVEVRIIGHNEKGELNGSFLPLAHERLDDDGQVIFDLLVEYDGELPFWDKSSPDAIKEVFNMSKGSFKRAIGHLYKKKIINIETGKITLTKKGWSRVDD.

The protein belongs to the CvfB family.

In Staphylococcus epidermidis (strain ATCC 12228 / FDA PCI 1200), this protein is Conserved virulence factor B (cvfB).